We begin with the raw amino-acid sequence, 96 residues long: uncharacterized protein (96 aa).

This is an uncharacterized protein from Escherichia coli (strain K12).